Here is a 147-residue protein sequence, read N- to C-terminus: Echinoidin (147 aa).

In terms of domain architecture, C-type lectin spans 1–143 (GCCPTFWTSF…STRHYLICKL (143 aa)). Cystine bridges form between Cys-3-Cys-14, Cys-31-Cys-141, and Cys-116-Cys-132. O-linked (Hex) serine glycosylation is present at Ser-38. Positions 39–41 (RGD) match the Cell attachment site motif.

As to quaternary structure, homodimer; disulfide-linked. The identity of the saccharide is not reported in PubMed:3571253, and it is unlikely to be N-acetylgalactosamine. The sugar attached to Ser-38 is represented simply as Hex. Coelemic fluid.

The protein localises to the secreted. Role in the defense system of the organism against microorganisms. This lectin is specific for Gal-GalNAc. The sequence is that of Echinoidin from Heliocidaris crassispina (Sea urchin).